We begin with the raw amino-acid sequence, 329 residues long: DNA repair protein RAD51 homolog 4 (329 aa).

The preferentially binds ssDNA stretch occupies residues 1–83; sequence MGMLRAGLCP…ELKTSTAILS (83 aa). The segment at 4-77 is interaction with XRCC2; it reads LRAGLCPGLT…GADLYEELKT (74 aa). The segment at 77 to 328 is interaction with RAD51C; it reads TSTAILSTGI…EQSPELPGKQ (252 aa). Residue 107–114 participates in ATP binding; sequence GGPGSGKT.

Belongs to the RecA family. RAD51 subfamily. As to quaternary structure, part of the BCDX2 complex consisting of RAD51B, RAD51C, RAD51D and XRCC2; the complex has a ring-like structure arranged into a flat disc around a central channel. In the absence of DNA, the BCDX2 subcomplex XRCC2:RAD51D formed a multimeric ring structure; in the presence of single-stranded DNA it formed a filamentous structure with the ssDNA. Interacts with SWSAP1 and ZSWIM7; involved in homologous recombination repair. Interacts with BLM; required for stimulation of BLM activity by the BCDX2 subcomplex XRCC2:RAD51D. As to expression, highly expressed in brain followed by testis. Also expressed in heart, liver, kidney, spleen, lung and skeletal muscle.

The protein localises to the nucleus. The protein resides in the chromosome. Its subcellular location is the telomere. Its function is as follows. Involved in the homologous recombination repair (HRR) pathway of double-stranded DNA breaks arising during DNA replication or induced by DNA-damaging agents. Bind to single-stranded DNA (ssDNA) and has DNA-dependent ATPase activity. Part of the RAD51 paralog protein complex BCDX2 which acts in the BRCA1-BRCA2-dependent HR pathway. Upon DNA damage, BCDX2 acts downstream of BRCA2 recruitment and upstream of RAD51 recruitment. BCDX2 binds predominantly to the intersection of the four duplex arms of the Holliday junction and to junction of replication forks. The BCDX2 complex was originally reported to bind single-stranded DNA, single-stranded gaps in duplex DNA and specifically to nicks in duplex DNA. Involved in telomere maintenance. The BCDX2 subcomplex XRCC2:RAD51D can stimulate Holliday junction resolution by BLM. In Mus musculus (Mouse), this protein is DNA repair protein RAD51 homolog 4 (Rad51d).